The primary structure comprises 361 residues: Isocitrate dehydrogenase [NAD] subunit 1, mitochondrial (361 aa).

The N-terminal 12 residues, 1–12 (MLRQGIAAQKKS), are a transit peptide targeting the mitochondrion. Substrate contacts are provided by Arg-110, Arg-141, and Asp-229. Asp-229 contacts Mg(2+).

Belongs to the isocitrate and isopropylmalate dehydrogenases family. As to quaternary structure, octamer of two non-identical subunits IDH1 and IDH2. Requires Mg(2+) as cofactor. It depends on Mn(2+) as a cofactor.

The protein resides in the mitochondrion. The catalysed reaction is D-threo-isocitrate + NAD(+) = 2-oxoglutarate + CO2 + NADH. Performs an essential role in the oxidative function of the citric acid cycle. The polypeptide is Isocitrate dehydrogenase [NAD] subunit 1, mitochondrial (IDH1) (Kluyveromyces lactis (strain ATCC 8585 / CBS 2359 / DSM 70799 / NBRC 1267 / NRRL Y-1140 / WM37) (Yeast)).